The chain runs to 647 residues: 1-deoxy-D-xylulose-5-phosphate synthase (647 aa).

Thiamine diphosphate contacts are provided by residues His-79 and 120–122; that span reads GHA. A Mg(2+)-binding site is contributed by Asp-152. Thiamine diphosphate is bound by residues 153–154, Asn-181, Phe-293, and Glu-377; that span reads GS. Residue Asn-181 participates in Mg(2+) binding.

It belongs to the transketolase family. DXPS subfamily. In terms of assembly, homodimer. The cofactor is Mg(2+). Thiamine diphosphate serves as cofactor.

The catalysed reaction is D-glyceraldehyde 3-phosphate + pyruvate + H(+) = 1-deoxy-D-xylulose 5-phosphate + CO2. It participates in metabolic intermediate biosynthesis; 1-deoxy-D-xylulose 5-phosphate biosynthesis; 1-deoxy-D-xylulose 5-phosphate from D-glyceraldehyde 3-phosphate and pyruvate: step 1/1. Functionally, catalyzes the acyloin condensation reaction between C atoms 2 and 3 of pyruvate and glyceraldehyde 3-phosphate to yield 1-deoxy-D-xylulose-5-phosphate (DXP). The sequence is that of 1-deoxy-D-xylulose-5-phosphate synthase from Bacteroides thetaiotaomicron (strain ATCC 29148 / DSM 2079 / JCM 5827 / CCUG 10774 / NCTC 10582 / VPI-5482 / E50).